The chain runs to 1192 residues: Integrator complex subunit 2 (1192 aa).

The chain crosses the membrane as a helical span at residues 420–436; sequence FVSLSFCMLLAFSTLVS.

This sequence belongs to the Integrator subunit 2 family. In terms of assembly, component of the Integrator complex, composed of core subunits INTS1, INTS2, INTS3, INTS4, INTS5, INTS6, INTS7, INTS8, INTS9/RC74, INTS10, INTS11/CPSF3L, INTS12, INTS13, INTS14 and INTS15. The core complex associates with protein phosphatase 2A subunits PPP2CA and PPP2R1A, to form the Integrator-PP2A (INTAC) complex.

The protein resides in the nucleus. Its subcellular location is the nucleus membrane. The protein localises to the cytoplasm. Component of the integrator complex, a multiprotein complex that terminates RNA polymerase II (Pol II) transcription in the promoter-proximal region of genes. The integrator complex provides a quality checkpoint during transcription elongation by driving premature transcription termination of transcripts that are unfavorably configured for transcriptional elongation: the complex terminates transcription by (1) catalyzing dephosphorylation of the C-terminal domain (CTD) of Pol II subunit POLR2A/RPB1 and SUPT5H/SPT5, (2) degrading the exiting nascent RNA transcript via endonuclease activity and (3) promoting the release of Pol II from bound DNA. The integrator complex is also involved in terminating the synthesis of non-coding Pol II transcripts, such as enhancer RNAs (eRNAs), small nuclear RNAs (snRNAs), telomerase RNAs and long non-coding RNAs (lncRNAs). This is Integrator complex subunit 2 (INTS2) from Gallus gallus (Chicken).